A 56-amino-acid polypeptide reads, in one-letter code: Small ribosomal subunit protein uS14z/uS14y/uS14x (56 aa).

Zn(2+)-binding residues include C21, C24, C39, and C42.

The protein belongs to the universal ribosomal protein uS14 family. It depends on Zn(2+) as a cofactor.

This Arabidopsis thaliana (Mouse-ear cress) protein is Small ribosomal subunit protein uS14z/uS14y/uS14x (RPS29A).